Here is a 176-residue protein sequence, read N- to C-terminus: ATP-dependent protease subunit HslV (176 aa).

T5 is a catalytic residue. A161, C164, and T167 together coordinate Na(+).

Belongs to the peptidase T1B family. HslV subfamily. As to quaternary structure, a double ring-shaped homohexamer of HslV is capped on each side by a ring-shaped HslU homohexamer. The assembly of the HslU/HslV complex is dependent on binding of ATP.

It is found in the cytoplasm. It carries out the reaction ATP-dependent cleavage of peptide bonds with broad specificity.. With respect to regulation, allosterically activated by HslU binding. Its function is as follows. Protease subunit of a proteasome-like degradation complex believed to be a general protein degrading machinery. This is ATP-dependent protease subunit HslV from Caldicellulosiruptor saccharolyticus (strain ATCC 43494 / DSM 8903 / Tp8T 6331).